Reading from the N-terminus, the 203-residue chain is Translation initiation factor IF-3 (203 aa).

Belongs to the IF-3 family. Monomer.

Its subcellular location is the cytoplasm. IF-3 binds to the 30S ribosomal subunit and shifts the equilibrium between 70S ribosomes and their 50S and 30S subunits in favor of the free subunits, thus enhancing the availability of 30S subunits on which protein synthesis initiation begins. This Corynebacterium efficiens (strain DSM 44549 / YS-314 / AJ 12310 / JCM 11189 / NBRC 100395) protein is Translation initiation factor IF-3.